A 362-amino-acid polypeptide reads, in one-letter code: Chorismate synthase (362 aa).

Arg47 is an NADP(+) binding site. FMN is bound by residues 124–126 (RSS), Gly286, 301–305 (KPTAT), and Arg327.

This sequence belongs to the chorismate synthase family. Homotetramer. The cofactor is FMNH2.

The enzyme catalyses 5-O-(1-carboxyvinyl)-3-phosphoshikimate = chorismate + phosphate. It functions in the pathway metabolic intermediate biosynthesis; chorismate biosynthesis; chorismate from D-erythrose 4-phosphate and phosphoenolpyruvate: step 7/7. Catalyzes the anti-1,4-elimination of the C-3 phosphate and the C-6 proR hydrogen from 5-enolpyruvylshikimate-3-phosphate (EPSP) to yield chorismate, which is the branch point compound that serves as the starting substrate for the three terminal pathways of aromatic amino acid biosynthesis. This reaction introduces a second double bond into the aromatic ring system. The sequence is that of Chorismate synthase from Synechocystis sp. (strain ATCC 27184 / PCC 6803 / Kazusa).